Here is a 215-residue protein sequence, read N- to C-terminus: Adenylate kinase (215 aa).

ATP is bound at residue Gly-10–Thr-15. The segment at Ser-30–Val-59 is NMP. Residues Thr-31, Arg-36, Gly-57–Val-59, Gly-85–Arg-88, and Gln-92 each bind AMP. The LID stretch occupies residues Gly-122–Asp-159. ATP-binding positions include Arg-123 and Thr-132–Tyr-133. AMP-binding residues include Arg-156 and Arg-167. Gln-200 is a binding site for ATP.

Belongs to the adenylate kinase family. Monomer.

The protein localises to the cytoplasm. The catalysed reaction is AMP + ATP = 2 ADP. It functions in the pathway purine metabolism; AMP biosynthesis via salvage pathway; AMP from ADP: step 1/1. Its function is as follows. Catalyzes the reversible transfer of the terminal phosphate group between ATP and AMP. Plays an important role in cellular energy homeostasis and in adenine nucleotide metabolism. This chain is Adenylate kinase, found in Neisseria meningitidis serogroup B (strain ATCC BAA-335 / MC58).